Here is a 399-residue protein sequence, read N- to C-terminus: uncharacterized protein (399 aa).

This is an uncharacterized protein from Aquifex aeolicus (strain VF5).